Reading from the N-terminus, the 1007-residue chain is SUPPRESSOR OF ABI3-5 (1007 aa).

2 disordered regions span residues 1-185 (MDPS…RDRE) and 204-269 (ESPH…FSAT). 4 stretches are compositionally biased toward basic and acidic residues: residues 40 to 49 (PDERLMRDDV), 94 to 120 (YYHDSEAGSRNGHYRDHEHERSSRYDG), 138 to 185 (HSRD…RDRE), and 204 to 214 (ESPHKRYEKSR). Residues 227-236 (RSPRGRSHGR) show a composition bias toward basic residues. Over residues 237–264 (SYREDSYEGDHWNESERRREYEDRHNQD) the composition is skewed to basic and acidic residues. Residues 272-352 (ATVVVKGLSM…RKLMFHYSQP (81 aa)) form the RRM 1 domain. The RanBP2-type zinc finger occupies 378–407 (VPTDWICTICGCINFARRTSCFQCNEPKTK). One can recognise an RRM 2 domain in the interval 432–512 (HVLVVRGLDE…KILRVAYAKS (81 aa)). 6 disordered regions span residues 556–581 (GEKQNTGGQAQGVGEIESQKGTSAPQ), 631–656 (PDQNNESKVTENQPDSAKKEKSSQQK), 725–755 (HETQIQRPSPSLGDNPPTVSAEARSSFSTGQ), 771–797 (STSNHGVSALTTAESSSSSTTGGTLMG), 810–910 (ASSS…GITT), and 945–977 (SGLGKDGSGMKEPVQAQGVDRRAGLGSQQKKVD). Residues 631-645 (PDQNNESKVTENQPD) are compositionally biased toward polar residues. Composition is skewed to low complexity over residues 778 to 793 (SALTTAESSSSSTTGG) and 823 to 835 (PSASPASVSVSGS). Residues 849 to 867 (THREQPQTSYRDRAAERRN) are compositionally biased toward basic and acidic residues. Residues 928–974 (ESNVGNRMLRNMGWHEGSGLGKDGSGMKEPVQAQGVDRRAGLGSQQK) form the G-patch domain.

Interacts with the pre-spliceosomal component U2AF65A. In terms of tissue distribution, ubiquitous with highest expression in siliques toward the end of seed maturation.

It localises to the nucleus. Its function is as follows. Splicing factor that controls alternative splicing of the developmental regulator ABI3. Reduces splicing of a cryptic intron in ABI3, leading to a decreased in ABI3-beta transcript. Regulates the splicing of the receptor-like kinase SNC4/LRKL-2.6. The sequence is that of SUPPRESSOR OF ABI3-5 from Arabidopsis thaliana (Mouse-ear cress).